The following is a 596-amino-acid chain: Elongation factor 4 (596 aa).

The 183-residue stretch at 2–184 folds into the tr-type G domain; that stretch reads KQIRNFSIIA…VIVAKIPPPE (183 aa). Residues 14 to 19 and 131 to 134 each bind GTP; these read DHGKST and NKID.

The protein belongs to the TRAFAC class translation factor GTPase superfamily. Classic translation factor GTPase family. LepA subfamily.

Its subcellular location is the cell inner membrane. It carries out the reaction GTP + H2O = GDP + phosphate + H(+). In terms of biological role, required for accurate and efficient protein synthesis under certain stress conditions. May act as a fidelity factor of the translation reaction, by catalyzing a one-codon backward translocation of tRNAs on improperly translocated ribosomes. Back-translocation proceeds from a post-translocation (POST) complex to a pre-translocation (PRE) complex, thus giving elongation factor G a second chance to translocate the tRNAs correctly. Binds to ribosomes in a GTP-dependent manner. This Shewanella baltica (strain OS223) protein is Elongation factor 4.